The primary structure comprises 569 residues: Formate--tetrahydrofolate ligase (569 aa).

Residue 64–71 participates in ATP binding; the sequence is TPHGEGKT.

Belongs to the formate--tetrahydrofolate ligase family.

It carries out the reaction (6S)-5,6,7,8-tetrahydrofolate + formate + ATP = (6R)-10-formyltetrahydrofolate + ADP + phosphate. The protein operates within one-carbon metabolism; tetrahydrofolate interconversion. The polypeptide is Formate--tetrahydrofolate ligase (Shewanella sp. (strain MR-7)).